Consider the following 110-residue polypeptide: Ribonuclease P protein component 4 (110 aa).

The Zn(2+) site is built by C65, C68, C94, and C97.

Belongs to the eukaryotic/archaeal RNase P protein component 4 family. As to quaternary structure, consists of a catalytic RNA component and at least 4-5 protein subunits. Zn(2+) is required as a cofactor.

It localises to the cytoplasm. The catalysed reaction is Endonucleolytic cleavage of RNA, removing 5'-extranucleotides from tRNA precursor.. Its function is as follows. Part of ribonuclease P, a protein complex that generates mature tRNA molecules by cleaving their 5'-ends. In Methanococcus maripaludis (strain C5 / ATCC BAA-1333), this protein is Ribonuclease P protein component 4.